Reading from the N-terminus, the 210-residue chain is Thymidylate kinase (210 aa).

Residue 10 to 17 (GPDGAGKT) participates in ATP binding.

Belongs to the thymidylate kinase family.

It catalyses the reaction dTMP + ATP = dTDP + ADP. Functionally, phosphorylation of dTMP to form dTDP in both de novo and salvage pathways of dTTP synthesis. This chain is Thymidylate kinase, found in Geobacillus sp. (strain WCH70).